Reading from the N-terminus, the 619-residue chain is ATP-dependent zinc metalloprotease FtsH (619 aa).

Topologically, residues 1-5 are cytoplasmic; that stretch reads MKYFK. The chain crosses the membrane as a helical span at residues 6–26; the sequence is GISFYIIIFILILVIITFFTA. Residues 27-110 are Extracellular-facing; it reads TDNPPKMSYS…VTQPPQPPWW (84 aa). Residues 111–131 traverse the membrane as a helical segment; that stretch reads VSMLPTVGLVIILILIWFFFI. Over 132–619 the chain is Cytoplasmic; sequence QQSQGGGGGN…GSSQTPQLEG (488 aa). 204-211 is an ATP binding site; the sequence is GPPGTGKT. A Zn(2+)-binding site is contributed by His-426. Glu-427 is an active-site residue. His-430 and Asp-502 together coordinate Zn(2+).

It in the central section; belongs to the AAA ATPase family. This sequence in the C-terminal section; belongs to the peptidase M41 family. In terms of assembly, homohexamer. It depends on Zn(2+) as a cofactor.

It is found in the cell membrane. Functionally, acts as a processive, ATP-dependent zinc metallopeptidase for both cytoplasmic and membrane proteins. Plays a role in the quality control of integral membrane proteins. The polypeptide is ATP-dependent zinc metalloprotease FtsH (Ruminiclostridium cellulolyticum (strain ATCC 35319 / DSM 5812 / JCM 6584 / H10) (Clostridium cellulolyticum)).